Consider the following 827-residue polypeptide: Centrosomal protein of 95 kDa (827 aa).

Disordered regions lie at residues 115-145 (ISESSPNKSETEQYSKDSHGEEAGEDLERTE), 183-249 (GDTA…MVPS), 308-372 (FLTS…MSEK), 388-476 (LGDR…DSCH), and 489-558 (ELRK…KASP). The span at 123-145 (SETEQYSKDSHGEEAGEDLERTE) shows a compositional bias: basic and acidic residues. Over residues 187 to 199 (HTFSQRSNGAQNS) the composition is skewed to polar residues. 2 stretches are compositionally biased toward basic and acidic residues: residues 327 to 343 (EATRTRKPSKGERDENR) and 360 to 372 (PLTEQELHAMSEK). Phosphoserine occurs at positions 447, 449, and 451. Coiled-coil stretches lie at residues 584 to 633 (LTKM…VKKE) and 701 to 795 (LQIQ…DDDA).

It is found in the cytoplasm. Its subcellular location is the cytoskeleton. It localises to the microtubule organizing center. The protein localises to the centrosome. The protein resides in the spindle pole. In Mus musculus (Mouse), this protein is Centrosomal protein of 95 kDa (Cep95).